The sequence spans 3147 residues: Bassianolide nonribosomal cyclodepsipeptide synthetase (3147 aa).

Positions 1-12 (MEPPNNANTGQL) are enriched in polar residues. The interval 1–23 (MEPPNNANTGQLGPTLPNGTVDL) is disordered. Positions 69 to 454 (HVVYEIPEDV…INKLQSTDGS (386 aa)) are condensation 1. The segment at 495–887 (DDTPNKPAVC…GRMDSQVKIR (393 aa)) is adenylation 1. Residues 1015–1091 (PDASAGVTKL…SLQAAIGGSS (77 aa)) enclose the Carrier 1 domain. Position 1052 is an O-(pantetheine 4'-phosphoryl)serine (serine 1052). The condensation 2 stretch occupies residues 1109-1538 (SYSQGRLWFL…QTLISVVPLT (430 aa)). The adenylation 2 stretch occupies residues 1567 to 1973 (FATQVASYPD…GRMDFQFKIR (407 aa)). The interval 2041–2181 (TYTELDTVSS…FPTRDYLEQV (141 aa)) is S-adenosyl-L-methionine-dependent N-methyltransferase (MT). 2 consecutive Carrier domains span residues 2515 to 2589 (FPLS…RQQL) and 2615 to 2689 (APTT…EVSQ). O-(pantetheine 4'-phosphoryl)serine occurs at positions 2549 and 2649. A condensation 3 region spans residues 2735–3139 (QDVYLATHLQ…THLMEQVCNT (405 aa)).

This sequence belongs to the NRP synthetase family.

Its function is as follows. Bassianolide nonribosomal synthetase that mediates the biosynthesis of bassianolide (BSL), a non-ribosomal cyclodepsipeptide that shows insecticidal and cancer cell antiproliferative activity. BSLS first catalyzes the iterative synthesis of an enzyme-bound dipeptidol monomer intermediate from D-2-hydroxyisovalerate and L-leucine before performing the condensation and cyclization of 4 dipeptidol monomers to yield the cyclic tetrameric ester bassianolide. The N-methyltransferase MT domain is responsible for the methylation of the leucine residues of bassianolide. BSLS is flexible with both the amino acid and hydroxyl acid precursors, and produces bassianolide as the major product (containing N-methyl-L-Leu), together with small amounts of beauvericin and its analogs beauvericins A-C (containing N-methyl-L-Phe). The polypeptide is Bassianolide nonribosomal cyclodepsipeptide synthetase (Beauveria bassiana (strain ARSEF 2860) (White muscardine disease fungus)).